We begin with the raw amino-acid sequence, 535 residues long: Probable acyl-activating enzyme 22 (535 aa).

It belongs to the ATP-dependent AMP-binding enzyme family.

Functionally, may act as an acid--thiol ligase that activates carboxylic acids by forming acyl-CoAs. This is Probable acyl-activating enzyme 22 (AEE22) from Arabidopsis thaliana (Mouse-ear cress).